Here is a 59-residue protein sequence, read N- to C-terminus: Large ribosomal subunit protein uL30 (59 aa).

This sequence belongs to the universal ribosomal protein uL30 family. As to quaternary structure, part of the 50S ribosomal subunit.

This chain is Large ribosomal subunit protein uL30, found in Geotalea uraniireducens (strain Rf4) (Geobacter uraniireducens).